Reading from the N-terminus, the 936-residue chain is F-box protein dre-1 (936 aa).

Residues 1–67 (MSSSSSPFFH…GSSEADNPTL (67 aa)) are disordered. Residues 22–36 (QQSPSYSQNSNSPSQ) show a composition bias toward low complexity. Polar residues predominate over residues 48-63 (GSTSMRYSPSGSSEAD). Positions 159–205 (QDHINRLPEELLLKVFSFLPDKSLLACSSVSYRFNQISNSHEVWKEL) constitute an F-box domain. PbH1 repeat units lie at residues 405 to 427 (SAAPKFKYCTVLDCENVGIYITD), 428 to 450 (NATGHYEHCEIARNTLAGVWVKN), 451 to 473 (HANPYFRKCTIHSGKDVGVFTFE), 474 to 496 (HGQGYFEKCNIHSNRISGIEVKN), 497 to 519 (SANPVVIRCEVHHGYTGGIYVHE), 520 to 542 (RGRGQFMENRIYANAYAGIWITS), 543 to 565 (HSDPTIRKNEIFTGQQGGVYIFG), 566 to 588 (EGRGLIEQNNIYGNALAGIQIRS), 589 to 611 (QSDPIVRLNKIHDGLHGGIYVHE), 612 to 634 (KGRGLIEENEVYGNTLAGIWVTT), 635 to 657 (GSSPILRKNRIHSGKQVGVYFYD), 658 to 680 (QGHGLLEENDIFNHLYSGVQIRT), 681 to 703 (GSNPKITRNKIWGGQNGGVLVYN), 704 to 726 (GGKGCLEDNEIFDNAMAGVWIKT), 727 to 749 (DSEPTLRRNKIYDGRDGGVCIFN), 750 to 772 (RGKGLLEDNEIFRNAQAGVLIST), 773 to 795 (ESNPTLRRNRVFDGKSAGIEITN), and 796 to 818 (GATATLEENQLFRNKYGGLCVAT). The UBR-type zinc finger occupies 843–914 (GLCLFKVSSN…LERHCHLQNV (72 aa)).

As to quaternary structure, component of a SCF ubiquitin ligase complex. Interacts (via F-box) with skr-1. Interacts with blmp-1; the interaction targets blmp-1 for proteasomal degradation. Interacts with ced-9; the interaction inhibits ced-9 activity, either directly or indirectly. In mid-embryogenesis, expression is most prominent in epidermal and intestinal cells. By the 1.5-fold stage of embryogenesis, expression is additionally detected in neurons and other cells. During larval and adult stages, highest expression is seen in epidermal seam cells and hypodermis. In larvae, strongly expressed in the P epidermal blast cells and descendents that give rise to the vulva and weakly expressed in the somatic gonad, including the gonadoblasts, the anchor cell and the distal tip cells. Some weak expression also seen in adult spermatheca and uterus. In the musculature, expressed in the pharynx, anal depressor, sex muscles, and body wall muscles. Detected in neurons of the head, tail, ventral cord and periphery. Also expressed in the embryonic tail spike cell.

It is found in the nucleus. It localises to the cytoplasm. It participates in protein modification; protein ubiquitination. Substrate recognition component of a SCF (SKP1-CUL1-F-box protein) E3 ubiquitin-protein ligase complex which mediates the ubiquitination and subsequent proteasomal degradation of target proteins including blmp-1. Promotes ubiquitination of snail family proteins ces-1, scrt-1 and snai-1. Heterochronic protein which is required for the timing of gonad development and epidermal seam cell differentiation. Regulates tail-spike cell death through inhibition of the apoptosis regulator ced-9. The sequence is that of F-box protein dre-1 from Caenorhabditis elegans.